Consider the following 374-residue polypeptide: UPF0754 membrane protein SAS1767 (374 aa).

2 helical membrane passes run 4-24 and 354-374; these read LFII…TNVI and SLGF…AIFV.

This sequence belongs to the UPF0754 family.

The protein resides in the cell membrane. This Staphylococcus aureus (strain MSSA476) protein is UPF0754 membrane protein SAS1767.